The primary structure comprises 501 residues: MKKKSNHLKGRKVLVSLLVSLQVFAFASISSAAPTEPNDIDMGIAGLNYNRNEVLAIQGDQISSFVPKEGIQSNGKFIVVERDKKSLTTSPVDISIVDSITNRTYPGAIQLANKDFADNQPSLVMAARKPLDISIDLPGLKNENTISVQNPNYGTVSSAIDQLVSTWGEKYSSTHTLPARLQYAESMVYSQNQISSALNVNAKVLNGTLGIDFNAVANGEKKVMVAAYKQIFYTVSAGLPNNPSDLFDDSVTFAELARKGVSNEAPPLMVSNVAYGRTIYVKLETTSKSNDVQTAFKLLLNNPSIQASGQYKDIYENSSFTAVVLGGDAQTHNQVVTKDFNVIQSVIKDNAQFSSKNPAYPISYTSVFLKDNSIAAVHNNTEYIETKTTEYSKGKIKLDHSGAYVAQFEVYWDEFSYDADGQEIVTRKSWDGNWRDRSAHFSTEIPLPPNAKNIRIFARECTGLAWEWWRTVVDEYNVPLASDINVSIWGTTLYPKSSITH.

The signal sequence occupies residues methionine 1–alanine 32. The next 4 beta stranded transmembrane spans lie at glutamine 191–valine 204, isoleucine 211–glutamate 220, serine 289–leucine 298, and glutamine 306–serine 318. Positions glutamate 460–arginine 470 match the Conserved undecapeptide motif. A Cholesterol binding motif is present at residues threonine 492–leucine 493.

Belongs to the cholesterol-dependent cytolysin family. In terms of assembly, homooligomeric pore complex of 35 to 50 subunits; when inserted in the host membrane.

The protein localises to the secreted. It localises to the host cell membrane. With respect to regulation, inhibited by cholesterol and thiol reagents. Functionally, a cholesterol-dependent toxin that causes cytolysis by forming pores in cholesterol containing host membranes. After binding to target membranes, the protein undergoes a major conformation change, leading to its insertion in the host membrane and formation of an oligomeric pore complex. Cholesterol is required for binding to host cell membranes, membrane insertion and pore formation; cholesterol binding is mediated by a Thr-Leu pair in the C-terminus. Can be reversibly inactivated by oxidation. The polypeptide is Alveolysin (alv) (Paenibacillus alvei (Bacillus alvei)).